A 391-amino-acid chain; its full sequence is uncharacterized protein (391 aa).

Residues 247-387 (AVIVYATIYS…KIKEFGRKLA (141 aa)) form the Flavodoxin-like domain.

This is an uncharacterized protein from Methanocaldococcus jannaschii (strain ATCC 43067 / DSM 2661 / JAL-1 / JCM 10045 / NBRC 100440) (Methanococcus jannaschii).